A 380-amino-acid chain; its full sequence is PqqA peptide cyclase (380 aa).

Residues 8-223 form the Radical SAM core domain; sequence VNPPLWLLAE…VADYRQKMAA (216 aa). Positions 22, 26, and 29 each coordinate [4Fe-4S] cluster.

Belongs to the radical SAM superfamily. PqqE family. As to quaternary structure, interacts with PqqD. The interaction is necessary for activity of PqqE. It depends on [4Fe-4S] cluster as a cofactor.

It catalyses the reaction [PQQ precursor protein] + S-adenosyl-L-methionine = E-Y cross-linked-[PQQ precursor protein] + 5'-deoxyadenosine + L-methionine + H(+). Its pathway is cofactor biosynthesis; pyrroloquinoline quinone biosynthesis. Functionally, catalyzes the cross-linking of a glutamate residue and a tyrosine residue in the PqqA protein as part of the biosynthesis of pyrroloquinoline quinone (PQQ). This is PqqA peptide cyclase from Klebsiella pneumoniae (strain 342).